The following is a 270-amino-acid chain: tRNA pseudouridine synthase A (270 aa).

Asp60 acts as the Nucleophile in catalysis. Tyr118 is a binding site for substrate.

This sequence belongs to the tRNA pseudouridine synthase TruA family. Homodimer.

The catalysed reaction is uridine(38/39/40) in tRNA = pseudouridine(38/39/40) in tRNA. In terms of biological role, formation of pseudouridine at positions 38, 39 and 40 in the anticodon stem and loop of transfer RNAs. The chain is tRNA pseudouridine synthase A from Salmonella agona (strain SL483).